We begin with the raw amino-acid sequence, 322 residues long: Beta-ketoacyl-[acyl-carrier-protein] synthase III (322 aa).

Active-site residues include cysteine 112 and histidine 249. The tract at residues 250 to 254 (QANQR) is ACP-binding. Asparagine 279 is a catalytic residue.

This sequence belongs to the thiolase-like superfamily. FabH family. Homodimer.

It localises to the cytoplasm. The catalysed reaction is malonyl-[ACP] + acetyl-CoA + H(+) = 3-oxobutanoyl-[ACP] + CO2 + CoA. Its pathway is lipid metabolism; fatty acid biosynthesis. Functionally, catalyzes the condensation reaction of fatty acid synthesis by the addition to an acyl acceptor of two carbons from malonyl-ACP. Catalyzes the first condensation reaction which initiates fatty acid synthesis and may therefore play a role in governing the total rate of fatty acid production. Possesses both acetoacetyl-ACP synthase and acetyl transacylase activities. Its substrate specificity determines the biosynthesis of branched-chain and/or straight-chain of fatty acids. This is Beta-ketoacyl-[acyl-carrier-protein] synthase III from Caulobacter vibrioides (strain ATCC 19089 / CIP 103742 / CB 15) (Caulobacter crescentus).